The primary structure comprises 686 residues: MGTVSSRRLWWPLPLLLLLLLGPAGTRAQEDDDDDYEELVLALRSEEEGLADALQNGATATFHRCAKDPWRLPGTYVVVLKEETHRSQPERTARRLQAQAARRGYLIKLLHVFHDLLPGFLVKMSRDLLELALRLPHVDYIEEDSSVFAQSIPWNLERITPARYQADEYQPPNGGSLVEVYLLDTSIQSGHREIEGRVMVTDFGSVPKEDGTRFHRQASKCDSHGTHLAGVVSGRDAGVAKGASLHSLRVLNCQGKGTVSSTLIGLEFICKSQLVQPVGPLVVLLPLAGGYSRVLNAACQRLARARVVLVAAAGNFRDDACLYSPASAPEVITVGATNAQDQPVTLGTLGTNFGRCVDLFAPGEDIIGASSDCSTCFVSRSGTSQAAAHVAGIAAMMLSAEPELTLAELRQRLIHFSAKDVINEAWFPEDQRVLTPNLVAALPPSTHGEGWQLFCRTVWSAHSGPTRMATAMARCAPDEELLSCSSFSRSGKRRGERIEAQGGRRVCLAHNAFGGEGVYAIARCCLLPQANCSVHTAPPAGAGMGTRAHCHQQGHILTGCSSHWEVEDLGTHKPPVLRPEGQHNQCMGHRGASTHASCCHAPGLECKVKEHGLPAPQEQVTVTCEEGWTLTGCSALPGTSHVLGAYAVDDTCVVRSRDVSTTGSTSEETVAAIAICCRSQHLAQAS.

Positions 1–28 (MGTVSSRRLWWPLPLLLLLLLGPAGTRA) are cleaved as a signal peptide. Residues 29–150 (QEDDDDDYEE…IEEDSSVFAQ (122 aa)) constitute a propeptide that is removed on maturation. Position 36 is a sulfotyrosine (tyrosine 36). Serine 45 bears the Phosphoserine mark. Residues 75-147 (TYVVVLKEET…VDYIEEDSSV (73 aa)) enclose the Inhibitor I9 domain. One can recognise a Peptidase S8 domain in the interval 153–459 (PWNLERITPA…GWQLFCRTVW (307 aa)). Catalysis depends on charge relay system residues aspartate 184 and histidine 224. 2 cysteine pairs are disulfide-bonded: cysteine 221/cysteine 253 and cysteine 321/cysteine 356. The active-site Charge relay system is serine 384. The C-terminal domain stretch occupies residues 448–686 (GEGWQLFCRT…CRSQHLAQAS (239 aa)). Intrachain disulfides connect cysteine 455/cysteine 525, cysteine 475/cysteine 524, and cysteine 484/cysteine 507. Residue asparagine 531 is glycosylated (N-linked (GlcNAc...) asparagine). 6 disulfide bridges follow: cysteine 532/cysteine 599, cysteine 550/cysteine 598, cysteine 560/cysteine 586, cysteine 606/cysteine 677, cysteine 624/cysteine 676, and cysteine 633/cysteine 652. Position 686 is a phosphoserine (serine 686).

This sequence belongs to the peptidase S8 family. Monomer. Can self-associate to form dimers and higher multimers which may have increased LDLR degrading activity. The precursor protein but not the mature protein may form multimers. Interacts with APOB, VLDLR, LRP8/APOER2 and BACE1. The full-length immature form (pro-PCSK9) interacts with SCNN1A, SCNN1B and SCNN1G. The pro-PCSK9 form (via C-terminal domain) interacts with LDLR. Interacts (via the C-terminal domain) with ANXA2 (via repeat Annexin 1); the interaction inhibits the degradation of LDLR. The cofactor is Ca(2+). Cleavage by furin and PCSK5 generates a truncated inactive protein that is unable to induce LDLR degradation. In terms of processing, undergoes autocatalytic cleavage in the endoplasmic reticulum to release the propeptide from the N-terminus and the cleavage of the propeptide is strictly required for its maturation and activation. The cleaved propeptide however remains associated with the catalytic domain through non-covalent interactions, preventing potential substrates from accessing its active site. As a result, it is secreted from cells as a propeptide-containing, enzymatically inactive protein. Post-translationally, phosphorylation protects the propeptide against proteolysis.

It localises to the cytoplasm. The protein localises to the secreted. It is found in the endosome. The protein resides in the lysosome. Its subcellular location is the cell surface. It localises to the endoplasmic reticulum. The protein localises to the golgi apparatus. With respect to regulation, its proteolytic activity is autoinhibited by the non-covalent binding of the propeptide to the catalytic domain. Inhibited by EGTA. Crucial player in the regulation of plasma cholesterol homeostasis. Binds to low-density lipid receptor family members: low density lipoprotein receptor (LDLR), very low density lipoprotein receptor (VLDLR), apolipoprotein E receptor (LRP1/APOER) and apolipoprotein receptor 2 (LRP8/APOER2), and promotes their degradation in intracellular acidic compartments. Acts via a non-proteolytic mechanism to enhance the degradation of the hepatic LDLR through a clathrin LDLRAP1/ARH-mediated pathway. May prevent the recycling of LDLR from endosomes to the cell surface or direct it to lysosomes for degradation. Can induce ubiquitination of LDLR leading to its subsequent degradation. Inhibits intracellular degradation of APOB via the autophagosome/lysosome pathway in a LDLR-independent manner. Involved in the disposal of non-acetylated intermediates of BACE1 in the early secretory pathway. Inhibits epithelial Na(+) channel (ENaC)-mediated Na(+) absorption by reducing ENaC surface expression primarily by increasing its proteasomal degradation. Regulates neuronal apoptosis via modulation of LRP8/APOER2 levels and related anti-apoptotic signaling pathways. This chain is Proprotein convertase subtilisin/kexin type 9 (PCSK9), found in Saguinus labiatus (Red-chested mustached tamarin).